A 286-amino-acid chain; its full sequence is 5-amino-6-(5-phospho-D-ribitylamino)uracil phosphatase YwtE (286 aa).

Aspartate 7 serves as the catalytic Nucleophile. Residue aspartate 7 participates in Mg(2+) binding. Leucine 8 serves as a coordination point for phosphate. Aspartate 9 contributes to the Mg(2+) binding site. Phosphate-binding positions include 41–42 and lysine 210; that span reads TG. Aspartate 233 and serine 234 together coordinate Mg(2+). Residue asparagine 236 coordinates phosphate.

This sequence belongs to the HAD-like hydrolase superfamily. Cof family. Mg(2+) is required as a cofactor.

It carries out the reaction 5-amino-6-(5-phospho-D-ribitylamino)uracil + H2O = 5-amino-6-(D-ribitylamino)uracil + phosphate. It participates in cofactor biosynthesis; riboflavin biosynthesis; 5-amino-6-(D-ribitylamino)uracil from GTP: step 4/4. Catalyzes the dephosphorylation of the riboflavin precursor 5-amino-6-(5-phospho-D-ribitylamino)uracil and of flavin mononucleotide (FMN) in vitro. Also catalyzes the dephosphorylation of phosphorylated 5-6 carbon sugars and monophosphate nucleotides (NMP) in vitro. This chain is 5-amino-6-(5-phospho-D-ribitylamino)uracil phosphatase YwtE (ywtE), found in Bacillus subtilis (strain 168).